Reading from the N-terminus, the 114-residue chain is Biofilm growth-associated repressor (114 aa).

The region spanning 17–111 (DMEKRANEVA…ALYTIFCAQE (95 aa)) is the HTH arsR-type domain. The H-T-H motif DNA-binding region spans 51–74 (VGELEQQIGIGQPTLSQQLGVLRE).

Represses an operon that comprises itself, XF_0764, XF_0765, XF_0766 and blh. Binds to a palindromic AT-rich sequence spanning the -10 region of the blh promoter and blocks transcription of the operon. This is Biofilm growth-associated repressor (bigR) from Xylella fastidiosa (strain 9a5c).